Reading from the N-terminus, the 332-residue chain is Ribosomal RNA small subunit methyltransferase H (332 aa).

S-adenosyl-L-methionine-binding positions include 36-38 (GGY), Asp-54, Phe-81, Asp-102, and Gln-109. The disordered stretch occupies residues 284–332 (VTAGQEEVSANPRARSAKLRAAERTAAPATADDGESPGWPSLANVMRGG).

The protein belongs to the methyltransferase superfamily. RsmH family.

The protein localises to the cytoplasm. It catalyses the reaction cytidine(1402) in 16S rRNA + S-adenosyl-L-methionine = N(4)-methylcytidine(1402) in 16S rRNA + S-adenosyl-L-homocysteine + H(+). Its function is as follows. Specifically methylates the N4 position of cytidine in position 1402 (C1402) of 16S rRNA. The chain is Ribosomal RNA small subunit methyltransferase H from Nitrobacter hamburgensis (strain DSM 10229 / NCIMB 13809 / X14).